Reading from the N-terminus, the 535-residue chain is Unconventional prefoldin RPB5 interactor 1 (535 aa).

Met-1 is modified (N-acetylmethionine). Disordered regions lie at residues 1–23 (MEAP…PALV), 223–330 (LLGE…VGDN), 352–383 (KNTT…QELP), and 412–431 (SRSR…AAEF). A compositionally biased stretch (pro residues) spans 7 to 18 (ETPPDPSPPSAP). Polar residues-rich tracts occupy residues 253–265 (TNVN…TDSH) and 276–296 (EPFS…SSSY). The span at 299 to 320 (DDDDDDDDDDDDDNIDDDDGDN) shows a compositional bias: acidic residues. Ser-372 carries the phosphoserine; by RPS6KB1 modification. Thr-373 is modified (phosphothreonine). Over residues 417–427 (NSVCSDTSESS) the composition is skewed to polar residues. Ser-442 carries the phosphoserine modification.

This sequence belongs to the RNA polymerase II subunit 5-mediating protein family. Homodimer. Component of the PAQosome complex which is responsible for the biogenesis of several protein complexes and which consists of R2TP complex members RUVBL1, RUVBL2, RPAP3 and PIH1D1, URI complex members PFDN2, PFDN6, PDRG1, UXT and URI1 as well as ASDURF, POLR2E and DNAAF10/WDR92. Interacts with POLR2E/RPB5, RUVBL2 and RUVBL1. Interacts with PFDN2, PFDN4 and STAP1; the interactions are phosphorylation-dependent and occur in a growth-dependent manner in the mitochondrion. Interacts with UXT. Interacts with PPP1CC; the interaction is phosphorylation-dependent and occurs in a growth factor-dependent manner. Interacts (via the middle C-terminal region) with GTF2F1 and GTF2F2. Interacts with DMAP1. Interacts with TSC1 and TSC2. Interacts with PRPF8 and EFTUD2 in a ZNHIT2-dependent manner. Phosphorylated. Phosphorylation occurs essentially on serine residues. Phosphorylation occurs in response to androgen treatment in prostate cancer cells in a mTOR-dependent manner. Phosphorylated; hyperhosphorylated in mitochondria in a mTORC-dependent signaling pathway. Phosphorylated at Ser-372 by RPS6KB1 in a growth factor- and rapamycin-dependent manner. S6K1-mediated mitochondrial phosphorylation at Ser-372 disrupts the URI1-PPP1CC complex in the mitochondrion, relieves PPP1CC phosphatase inhibition activity and hence engages a negative feedback diminishing RPS6KB1 kinase activity, preventing sustained S6K1-dependent signaling. In terms of tissue distribution, ubiquitous. Expressed in ovarian cancers (at protein level). Expressed strongly in skeletal muscle. Expressed weakly in brain, heart, pancreas and in prostate epithelial cells.

Its subcellular location is the nucleus. The protein resides in the cytoplasm. It localises to the mitochondrion. It is found in the cell projection. The protein localises to the dendrite. Its function is as follows. Involved in gene transcription regulation. Acts as a transcriptional repressor in concert with the corepressor UXT to regulate androgen receptor (AR) transcription. May act as a tumor suppressor to repress AR-mediated gene transcription and to inhibit anchorage-independent growth in prostate cancer cells. Required for cell survival in ovarian cancer cells. Together with UXT, associates with chromatin to the NKX3-1 promoter region. Antagonizes transcriptional modulation via hepatitis B virus X protein. In terms of biological role, plays a central role in maintaining S6K1 signaling and BAD phosphorylation under normal growth conditions thereby protecting cells from potential deleterious effects of sustained S6K1 signaling. The URI1-PPP1CC complex acts as a central component of a negative feedback mechanism that counteracts excessive S6K1 survival signaling to BAD in response to growth factors. Mediates inhibition of PPP1CC phosphatase activity in mitochondria. Coordinates the regulation of nutrient-sensitive gene expression availability in a mTOR-dependent manner. Seems to be a scaffolding protein able to assemble a prefoldin-like complex that contains PFDs and proteins with roles in transcription and ubiquitination. The chain is Unconventional prefoldin RPB5 interactor 1 (URI1) from Homo sapiens (Human).